The following is a 282-amino-acid chain: CD320 antigen (282 aa).

Positions 1 to 35 are cleaved as a signal peptide; the sequence is MSGGWMAQVGAWRTGALGLALLLLLGLGLGLEAAA. The Extracellular portion of the chain corresponds to 36-229; that stretch reads SPLSTPTSAQ…GDQSGSPTAY (194 aa). An LDL-receptor class A 1 domain is found at 53-90; the sequence is SCPPTKFQCRTSGLCVPLTWRCDRDLDCSDGSDEEECR. 3 cysteine pairs are disulfide-bonded: Cys-54-Cys-67, Cys-61-Cys-80, and Cys-74-Cys-89. The Ca(2+) site is built by Trp-72, Asp-75, Asp-77, Asp-79, Asp-85, and Glu-86. Residue Asn-126 is glycosylated (N-linked (GlcNAc...) asparagine). The region spanning 131–168 is the LDL-receptor class A 2 domain; that stretch reads ACLAGELRCTLSDDCIPLTWRCDGHPDCPDSSDELGCG. 3 cysteine pairs are disulfide-bonded: Cys-132-Cys-145, Cys-139-Cys-158, and Cys-152-Cys-167. 6 residues coordinate Ca(2+): Trp-150, Asp-153, His-155, Asp-157, Asp-163, and Glu-164. Residues Asn-195 and Asn-213 are each glycosylated (N-linked (GlcNAc...) asparagine). The interval 199-223 is disordered; it reads MGPPVTLESVPSVGNATSSSAGDQS. Polar residues predominate over residues 210–223; that stretch reads SVGNATSSSAGDQS. The helical transmembrane segment at 230–250 threads the bilayer; that stretch reads GVIAAAAVLSASLVTATLLLL. Topologically, residues 251-282 are cytoplasmic; sequence SWLRAQERLRPLGLLVAMKESLLLSEQKTSLP.

Interacts (via LDL-receptor class A domains) with TCN2. Detected in the germinal center (GC) of lymphoid follicles (at protein level). Expressed abundantly on follicular dendritic cells (FDCs).

It localises to the cell membrane. In terms of biological role, receptor for transcobalamin saturated with cobalamin (TCbl). Plays an important role in cobalamin uptake. Plasma membrane protein that is expressed on follicular dendritic cells (FDC) and mediates interaction with germinal center B cells. Functions as costimulator to promote B cell responses to antigenic stimuli; promotes B cell differentiation and proliferation. Germinal center-B (GC-B) cells differentiate into memory B-cells and plasma cells (PC) through interaction with T-cells and follicular dendritic cells (FDC). CD320 augments the proliferation of PC precursors generated by IL-10. This is CD320 antigen (CD320) from Homo sapiens (Human).